The sequence spans 424 residues: UPF0597 protein Ssed_2537 (424 aa).

The protein belongs to the UPF0597 family.

The polypeptide is UPF0597 protein Ssed_2537 (Shewanella sediminis (strain HAW-EB3)).